A 493-amino-acid chain; its full sequence is Putative lon protease homolog (493 aa).

52–59 is an ATP binding site; that stretch reads GPPGVGKS.

Belongs to the peptidase S16 family.

The protein is Putative lon protease homolog of Thermoplasma acidophilum (strain ATCC 25905 / DSM 1728 / JCM 9062 / NBRC 15155 / AMRC-C165).